The chain runs to 181 residues: Bradykinin-potentiating and C-type natriuretic peptides (181 aa).

Positions 1 to 23 (MFVSRLAASGLLLLALLAVSLDG) are cleaved as a signal peptide. The propeptide occupies 24-30 (KPLQQWS). Gln31 bears the Pyrrolidone carboxylic acid mark. Positions 41–43 (LVV) are excised as a propeptide. A Pyrrolidone carboxylic acid modification is found at Gln44. 2 propeptides span residues 50 to 78 (TQLQ…AALD) and 90 to 157 (GSKA…KGLA). The interval 74 to 153 (EAALDTPPAG…GGGGGGARRL (80 aa)) is disordered. Positions 104-114 (SKGASATSAAS) are enriched in low complexity. Positions 140–150 (AGGGGGGGGGA) are enriched in gly residues. An intrachain disulfide couples Cys165 to Cys181.

It in the N-terminal section; belongs to the bradykinin-potentiating peptide family. In the C-terminal section; belongs to the natriuretic peptide family. As to expression, venom gland.

It localises to the secreted. Bradykinin-potentiating peptide both inhibits the activity of the angiotensin-converting enzyme (ACE) and enhances the action of bradykinin by inhibiting the peptidases that inactivate it. It acts as an indirect hypotensive agent. Functionally, antagonizes the vasodilatory actions of bradykinin at the B2 bradykinin receptor. Has no demonstrable hypotensive activity when injected intravenously in rats. Its function is as follows. has a vasorelaxant activity in rat aortic strips and a diuretic potency in anesthetized rats. May act by activating natriuretic receptors (NPR1 and/or NPR2). The polypeptide is Bradykinin-potentiating and C-type natriuretic peptides (Crotalus durissus collilineatus (Brazilian rattlesnake)).